The chain runs to 772 residues: Protocadherin beta-6 (772 aa).

A signal peptide spans 1-28 (METTLAKTPEKRQVVFLAILLLLWEAGS). 5 consecutive Cadherin domains span residues 31-133 (IRYS…SPEF), 134-242 (PDTE…APEF), 243-346 (VQSL…APKL), 347-450 (TISS…APAF), and 451-560 (TQTS…APFI). Topologically, residues 31 to 690 (IRYSIPEETE…QDEDMLTLYL (660 aa)) are extracellular. Cys96 and Cys102 are joined by a disulfide. N-linked (GlcNAc...) asparagine glycosylation is present at Asn169. The O-linked (Man) serine glycan is linked to Ser223. O-linked (Man) threonine glycosylation occurs at Thr225. Asn417 is a glycosylation site (N-linked (GlcNAc...) asparagine). An N-linked (GlcNAc...) asparagine glycan is attached at Asn566. Positions 575 to 675 (LPRAAEPGYL…SQPYLPLPEV (101 aa)) constitute a Cadherin 6 domain. The chain crosses the membrane as a helical span at residues 691-711 (VIALASVSSLFLLSVLLFVGV). Over 712-772 (RLCRRVREAS…DFKFLNHYSQ (61 aa)) the chain is Cytoplasmic.

Forms homodimers in trans (molecules expressed by two different cells). Forms promiscuous heterodimers in cis (at the plasma membrane of the same cell) with other protocadherins.

It localises to the cell membrane. Calcium-dependent cell-adhesion protein involved in cells self-recognition and non-self discrimination. Thereby, it is involved in the establishment and maintenance of specific neuronal connections in the brain. The sequence is that of Protocadherin beta-6 from Mus musculus (Mouse).